Consider the following 25-residue polypeptide: Pregnancy-associated glycoprotein 59g (25 aa).

N-linked (GlcNAc...) asparagine glycosylation is present at Asn-4.

The protein belongs to the peptidase A1 family. As to expression, highly expressed in the placenta between day 60 and day 100 of gestation.

Its subcellular location is the secreted. It is found in the extracellular space. The polypeptide is Pregnancy-associated glycoprotein 59g (Ovis aries (Sheep)).